Here is a 265-residue protein sequence, read N- to C-terminus: Phosphonates import ATP-binding protein PhnC 1 (265 aa).

An ABC transporter domain is found at 3–247 (LRLSAIELRH…HLDTLYANEQ (245 aa)). Residue 36-43 (GPSGAGKT) coordinates ATP.

Belongs to the ABC transporter superfamily. Phosphonates importer (TC 3.A.1.9.1) family. In terms of assembly, the complex is composed of two ATP-binding proteins (PhnC), two transmembrane proteins (PhnE) and a solute-binding protein (PhnD).

It localises to the cell inner membrane. It catalyses the reaction phosphonate(out) + ATP + H2O = phosphonate(in) + ADP + phosphate + H(+). In terms of biological role, part of the ABC transporter complex PhnCDE involved in phosphonates import. Responsible for energy coupling to the transport system. In Pseudomonas syringae pv. syringae (strain B728a), this protein is Phosphonates import ATP-binding protein PhnC 1.